The sequence spans 354 residues: 3-dehydroquinate synthase (354 aa).

Residues 100-104 (GATGD), 124-125 (TT), Lys136, Lys145, and 163-166 (FLKT) each bind NAD(+). Residues Glu178, His242, and His256 each contribute to the Zn(2+) site.

The protein belongs to the sugar phosphate cyclases superfamily. Dehydroquinate synthase family. It depends on Co(2+) as a cofactor. Requires Zn(2+) as cofactor. NAD(+) serves as cofactor.

It localises to the cytoplasm. The enzyme catalyses 7-phospho-2-dehydro-3-deoxy-D-arabino-heptonate = 3-dehydroquinate + phosphate. Its pathway is metabolic intermediate biosynthesis; chorismate biosynthesis; chorismate from D-erythrose 4-phosphate and phosphoenolpyruvate: step 2/7. In terms of biological role, catalyzes the conversion of 3-deoxy-D-arabino-heptulosonate 7-phosphate (DAHP) to dehydroquinate (DHQ). The chain is 3-dehydroquinate synthase from Staphylococcus aureus (strain NCTC 8325 / PS 47).